Here is a 583-residue protein sequence, read N- to C-terminus: PTS system lactose-specific EIICB component (583 aa).

Residues 8–409 (IEKGKPFFEK…VVDVMIYYPF (402 aa)) enclose the PTS EIIC type-3 domain. The next 9 membrane-spanning stretches (helical) occupy residues 30 to 50 (GFIA…ITYV), 64 to 84 (GILM…VAGT), 103 to 123 (INFI…AADP), 137 to 157 (KGLL…NFFI), 176 to 196 (VFKD…LDLL), 222 to 242 (GWIG…VGIH), 283 to 303 (FVAT…FMWL), 339 to 359 (VFFI…KFFV), and 381 to 401 (IVMG…LIVV). Positions 453-462 (ANETTTTESA) are enriched in low complexity. Residues 453–475 (ANETTTTESAPSDEEVSAKNSSN) form a disordered region. A PTS EIIB type-3 domain is found at 480 to 583 (QTNVLVLCAG…LDFVQQQFEK (104 aa)). Residue Cys487 is the Phosphocysteine intermediate; for EIIB activity of the active site. Position 487 is a phosphocysteine; by EIIA (Cys487).

It is found in the cell membrane. The catalysed reaction is lactose(out) + N(pros)-phospho-L-histidyl-[protein] = lactose 6-phosphate(in) + L-histidyl-[protein]. Functionally, the phosphoenolpyruvate-dependent sugar phosphotransferase system (sugar PTS), a major carbohydrate active transport system, catalyzes the phosphorylation of incoming sugar substrates concomitantly with their translocation across the cell membrane. The enzyme II LacEF PTS system is involved in lactose transport. This is PTS system lactose-specific EIICB component from Staphylococcus haemolyticus (strain JCSC1435).